The sequence spans 244 residues: Ureidoacrylate amidohydrolase RutB (244 aa).

Residue aspartate 38 is the Proton acceptor of the active site. Lysine 147 is a catalytic residue. Catalysis depends on cysteine 180, which acts as the Nucleophile.

The protein belongs to the isochorismatase family. RutB subfamily.

The enzyme catalyses (Z)-3-ureidoacrylate + H2O + H(+) = (Z)-3-aminoacrylate + NH4(+) + CO2. It carries out the reaction (Z)-3-ureidoacrylate + H2O = (Z)-3-aminoacrylate + carbamate + H(+). It catalyses the reaction (Z)-2-methylureidoacrylate + H2O + H(+) = (Z)-2-methylaminoacrylate + NH4(+) + CO2. Hydrolyzes ureidoacrylate to form aminoacrylate and carbamate. The carbamate hydrolyzes spontaneously, thereby releasing one of the nitrogen atoms of the pyrimidine ring as ammonia and one of its carbon atoms as CO2. The chain is Ureidoacrylate amidohydrolase RutB from Shigella flexneri serotype X (strain 2002017).